Consider the following 189-residue polypeptide: Hypoxanthine/guanine phosphoribosyltransferase (189 aa).

It belongs to the purine/pyrimidine phosphoribosyltransferase family. Archaeal HPRT subfamily. In terms of assembly, homodimer.

The protein resides in the cytoplasm. It carries out the reaction IMP + diphosphate = hypoxanthine + 5-phospho-alpha-D-ribose 1-diphosphate. It catalyses the reaction GMP + diphosphate = guanine + 5-phospho-alpha-D-ribose 1-diphosphate. The protein operates within purine metabolism; IMP biosynthesis via salvage pathway; IMP from hypoxanthine: step 1/1. Functionally, catalyzes a salvage reaction resulting in the formation of IMP that is energically less costly than de novo synthesis. The polypeptide is Hypoxanthine/guanine phosphoribosyltransferase (Methanothrix soehngenii (strain ATCC 5969 / DSM 3671 / JCM 10134 / NBRC 103675 / OCM 69 / GP-6) (Methanosaeta concilii)).